A 338-amino-acid polypeptide reads, in one-letter code: D-xylulose reductase (338 aa).

Residues C40, H65, and E151 each contribute to the Zn(2+) site.

This sequence belongs to the zinc-containing alcohol dehydrogenase family. In terms of assembly, homotetramer. Zn(2+) serves as cofactor.

The catalysed reaction is xylitol + NAD(+) = D-xylulose + NADH + H(+). This is D-xylulose reductase from Morganella morganii (Proteus morganii).